We begin with the raw amino-acid sequence, 206 residues long: uncharacterized protein (206 aa).

The N-terminal stretch at 1 to 18 (MKTYSLLLGLFISFGVLA) is a signal peptide.

This is an uncharacterized protein from Haemophilus influenzae (strain ATCC 51907 / DSM 11121 / KW20 / Rd).